Reading from the N-terminus, the 216-residue chain is MSSLVTPQHAEELSTGARQLGVELSAEHHEKLLGYLALLIKWNKAYNLTAVRDPDEMVSRHLLDSLSVMSFIHNERDNWLDVGSGGGMPGIPLAILHPHKRVTVLDANGKKTRFLTQVKMELKLDNLTVIHSRVEAFQPAQPFDGIISRAFSSMENFTNWTRHLGDTGTQWLAMKGLHPADELVALPADFTVESEQALTVPGCQGQRHLLILRRKA.

Residues G83, M88, V134–E135, and R149 each bind S-adenosyl-L-methionine.

The protein belongs to the methyltransferase superfamily. RNA methyltransferase RsmG family.

The protein resides in the cytoplasm. The enzyme catalyses guanosine(527) in 16S rRNA + S-adenosyl-L-methionine = N(7)-methylguanosine(527) in 16S rRNA + S-adenosyl-L-homocysteine. Functionally, specifically methylates the N7 position of guanine in position 527 of 16S rRNA. The polypeptide is Ribosomal RNA small subunit methyltransferase G (Pseudomonas putida (strain GB-1)).